The sequence spans 297 residues: Ubiquinol oxidase 2, mitochondrial (297 aa).

Residues V17–D43 are disordered. A helical membrane pass occupies residues A122–C142. Fe cation contacts are provided by E126, E165, and H168. The helical transmembrane segment at A184 to S204 threads the bilayer. Fe cation-binding residues include E216, E267, and H270.

This sequence belongs to the alternative oxidase family. As to quaternary structure, homodimer; disulfide-linked. The cofactor is Fe cation.

The protein resides in the mitochondrion inner membrane. It catalyses the reaction 2 a ubiquinol + O2 = 2 a ubiquinone + 2 H2O. Functionally, catalyzes the cyanide-resistant oxidation of ubiquinol and the reduction of molecular oxygen to water, but does not translocate protons and consequently is not linked to oxidative phosphorylation. May increase respiration when the cytochrome respiratory pathway is restricted, or in response to low temperatures. The sequence is that of Ubiquinol oxidase 2, mitochondrial (AOX2) from Nicotiana tabacum (Common tobacco).